The chain runs to 152 residues: Small ribosomal subunit protein uS19u (152 aa).

The protein belongs to the universal ribosomal protein uS19 family.

Its subcellular location is the cytoplasm. This is Small ribosomal subunit protein uS19u (RPS15A) from Arabidopsis thaliana (Mouse-ear cress).